Consider the following 611-residue polypeptide: Pescadillo homolog (611 aa).

Residues 310 to 335 (VQMGDPDEASPGEEEQFVAHASKSAP) form a disordered region. Acidic residues predominate over residues 314–325 (DPDEASPGEEEQ). Positions 354–455 (PSSRLFAPYT…KILLEDTYAQ (102 aa)) constitute a BRCT domain. 2 disordered regions span residues 469–506 (YEGA…ESNT) and 545–611 (VKKA…AGGK). Acidic residues predominate over residues 482 to 498 (ADMDVETDGEEGEADAS). Composition is skewed to basic and acidic residues over residues 552–569 (KKPD…KDMN) and 579–602 (KLYE…EQRK). A coiled-coil region spans residues 580 to 609 (LYEKMKYSQQKKAAEKEKLEQRKKQLQKAG).

The protein belongs to the pescadillo family. Component of the NOP7 complex, composed of ERB1, NOP7 and YTM1. The complex is held together by ERB1, which interacts with NOP7 via its N-terminal domain and with YTM1 via a high-affinity interaction between the seven-bladed beta-propeller domains of the 2 proteins. The NOP7 complex associates with the 66S pre-ribosome.

Its subcellular location is the nucleus. It localises to the nucleolus. It is found in the nucleoplasm. Functionally, component of the NOP7 complex, which is required for maturation of the 25S and 5.8S ribosomal RNAs and formation of the 60S ribosome. The polypeptide is Pescadillo homolog (Coprinopsis cinerea (strain Okayama-7 / 130 / ATCC MYA-4618 / FGSC 9003) (Inky cap fungus)).